Here is a 166-residue protein sequence, read N- to C-terminus: NAD(P)H-quinone oxidoreductase subunit I, chloroplastic (166 aa).

4Fe-4S ferredoxin-type domains are found at residues 55 to 84 (GRIH…VDWK) and 95 to 124 (LNYS…MTEE). [4Fe-4S] cluster is bound by residues Cys64, Cys67, Cys70, Cys74, Cys104, Cys107, Cys110, and Cys114.

This sequence belongs to the complex I 23 kDa subunit family. NDH is composed of at least 16 different subunits, 5 of which are encoded in the nucleus. The cofactor is [4Fe-4S] cluster.

The protein resides in the plastid. The protein localises to the chloroplast thylakoid membrane. It carries out the reaction a plastoquinone + NADH + (n+1) H(+)(in) = a plastoquinol + NAD(+) + n H(+)(out). It catalyses the reaction a plastoquinone + NADPH + (n+1) H(+)(in) = a plastoquinol + NADP(+) + n H(+)(out). Its function is as follows. NDH shuttles electrons from NAD(P)H:plastoquinone, via FMN and iron-sulfur (Fe-S) centers, to quinones in the photosynthetic chain and possibly in a chloroplast respiratory chain. The immediate electron acceptor for the enzyme in this species is believed to be plastoquinone. Couples the redox reaction to proton translocation, and thus conserves the redox energy in a proton gradient. This chain is NAD(P)H-quinone oxidoreductase subunit I, chloroplastic, found in Palafoxia arida (Spanish needles).